The chain runs to 315 residues: tRNA dimethylallyltransferase (315 aa).

11-18 (GPTASGKS) provides a ligand contact to ATP. 13–18 (TASGKS) serves as a coordination point for substrate. Interaction with substrate tRNA stretches follow at residues 36–39 (DSMQ) and 160–164 (QRLIR).

This sequence belongs to the IPP transferase family. Monomer. The cofactor is Mg(2+).

The catalysed reaction is adenosine(37) in tRNA + dimethylallyl diphosphate = N(6)-dimethylallyladenosine(37) in tRNA + diphosphate. Catalyzes the transfer of a dimethylallyl group onto the adenine at position 37 in tRNAs that read codons beginning with uridine, leading to the formation of N6-(dimethylallyl)adenosine (i(6)A). In Rickettsia bellii (strain RML369-C), this protein is tRNA dimethylallyltransferase.